A 663-amino-acid polypeptide reads, in one-letter code: Polyunsaturated fatty acid lipoxygenase ALOX15 (663 aa).

Residues 2–115 (GLYRVRVSTG…ILSLPEGTGR (114 aa)) form the PLAT domain. The Lipoxygenase domain occupies 116–663 (TVVDDPQGLF…PSLVENSVAI (548 aa)). Fe cation contacts are provided by histidine 361, histidine 366, histidine 541, histidine 545, and isoleucine 663.

It belongs to the lipoxygenase family. In terms of assembly, interacts with PEBP1; in response to IL13/interleukin-13, prevents the interaction of PEBP1 with RAF1 to activate the ERK signaling cascade. Fe cation serves as cofactor. Detected in tracheal epithelium.

Its subcellular location is the cytoplasm. It is found in the cytosol. The protein resides in the cell membrane. The protein localises to the lipid droplet. It carries out the reaction (5Z,8Z,11Z,14Z)-eicosatetraenoate + O2 = (12S)-hydroperoxy-(5Z,8Z,10E,14Z)-eicosatetraenoate. The catalysed reaction is (5Z,8Z,11Z,14Z)-eicosatetraenoate + O2 = (15S)-hydroperoxy-(5Z,8Z,11Z,13E)-eicosatetraenoate. The enzyme catalyses (9Z,12Z)-octadecadienoate + O2 = (13S)-hydroperoxy-(9Z,11E)-octadecadienoate. It catalyses the reaction (5Z,8Z,11Z,14Z)-eicosatetraenoate + 2 O2 = (14R,15S)-dihydroperoxy-(5Z,8Z,10E,12E)-eicosatetraenoate. It carries out the reaction (5Z,8Z,11Z,14Z)-eicosatetraenoate + 2 O2 = (8S,15S)-dihydroperoxy-(5Z,9E,11Z,13E)-eicosatetraenoate. The catalysed reaction is (14S,15R)-epoxy-(5Z,8Z,11Z)-eicosatrienoate + O2 = (8S)-hydroperoxy-(14S,15R)-epoxy-(5Z,9E,11Z)-eicosatrienoate. The enzyme catalyses (14S,15R)-epoxy-(5Z,8Z,11Z)-eicosatrienoate + O2 = (12S)-hydroperoxy-(14S,15R)-epoxy-(5Z,8Z,10E)-eicosatrienoate. It catalyses the reaction (14R,15S)-epoxy-(5Z,8Z,11Z)-eicosatrienoate + O2 = (5S)-hydroperoxy-(14R,15S)-epoxy-(6E,8Z,11Z)-eicosatrienoate. It carries out the reaction (14R,15S)-epoxy-(5Z,8Z,11Z)-eicosatrienoate + O2 = (12S)-hydroperoxy-(14R,15S)-epoxy-(5Z,8Z,10E)-eicosatrienoate. The catalysed reaction is (15R)-hydroperoxy-(5Z,8Z,11Z,13E)-eicosatetraenoate = 15-oxo-(5Z,8Z,11Z,13E)-eicosatetraenoate + H2O. The enzyme catalyses (15S)-hydroperoxy-(5Z,8Z,11Z,13E)-eicosatetraenoate = (14S,15S)-epoxy-(5Z,8Z,10E,12E)-eicosatetraenoate + H2O. It catalyses the reaction (12S)-hydroperoxy-(5Z,8Z,10E,14Z)-eicosatetraenoate = (8S)-hydroxy-(11S,12S)-epoxy-(5Z,9E,14Z)-eicosatrienoate. It carries out the reaction (4Z,7Z,10Z,13Z,16Z)-docosapentaenoate + O2 = 14-hydroperoxy-(4Z,7Z,10Z,12E,16Z)-docosapentaenoate. The catalysed reaction is (7Z,10Z,13Z,16Z,19Z)-docosapentaenoate + O2 = 14-hydroperoxy-(7Z,10Z,12E,16Z,19Z)-docosapentaenoate. The enzyme catalyses (4Z,7Z,10Z,13Z,16Z,19Z)-docosahexaenoate + O2 = (14S)-hydroperoxy-(4Z,7Z,10Z,12E,16Z,19Z)-docosahexaenoate. It catalyses the reaction (4Z,7Z,10Z,13Z,16Z,19Z)-docosahexaenoate + O2 = (17S)-hydroperoxy-(4Z,7Z,10Z,13Z,15E,19Z)-docosahexaenoate. It carries out the reaction (7S)-hydroperoxy-(4Z,8E,10Z,13Z,16Z,19Z)-docosahexaenoate + O2 = (7S,14S)-dihydroperoxy-(4Z,8E,10Z,12E,16Z,19Z)-docosahexaenoate. The catalysed reaction is (7S)-hydroperoxy-(4Z,8E,10Z,13Z,16Z,19Z)-docosahexaenoate + O2 = (7S,17S)-dihydroperoxy-(4Z,8E,10Z,13Z,15E,19Z)-docosahexaenoate. The enzyme catalyses (4Z,7Z,10Z,13Z,16Z,19Z)-docosahexaenoate + O2 = (11S)-hydroperoxy-(4Z,7Z,9E,13Z,16Z,19Z)-docosahexaenoate. It catalyses the reaction N-(5Z,8Z,11Z,14Z)-eicosatetraenoyl-taurine + O2 = N-(12S)-hydroperoxy-(5Z,8Z,10E,14Z)-eicosatetraenoyl-taurine. It carries out the reaction N-(5Z,8Z,11Z,14Z)-eicosatetraenoyl-gamma-aminobutanoate + O2 = N-(12S)-hydroperoxy-(5Z,8Z,10E,14Z)-eicosatetraenoyl-gamma-aminobutanoate. The catalysed reaction is N-(5Z,8Z,11Z,14Z)-eicosatetraenoyl-glycine + O2 = N-(12S)-hydroperoxy-(5Z,8Z,10E,14Z)-eicosatetraenoyl-glycine. The enzyme catalyses N-(5Z,8Z,11Z,14Z)-eicosatetraenoyl-L-alanine + O2 = N-(12S)-hydroperoxy-(5Z,8Z,10E,14Z)-eicosatetraenoyl-alanine. It catalyses the reaction N-(5Z,8Z,11Z,14Z)-eicosatetraenoyl-taurine + O2 = N-(15S)-hydroperoxy-(5Z,8Z,11Z,13E)-eicosatetraenoyl-taurine. It carries out the reaction N-(5Z,8Z,11Z,14Z)-eicosatetraenoyl-gamma-aminobutanoate + O2 = N-(15S)-hydroperoxy-(5Z,8Z,11Z,13E)-eicosatetraenoyl-gamma-aminobutanoate. The catalysed reaction is N-(5Z,8Z,11Z,14Z)-eicosatetraenoyl-glycine + O2 = N-(15S)-hydroperoxy-(5Z,8Z,11Z,13E)-eicosatetraenoyl-glycine. The enzyme catalyses N-(5Z,8Z,11Z,14Z)-eicosatetraenoyl-L-alanine + O2 = N-(15S)-hydroperoxy-(5Z,8Z,11Z,13E)-eicosatetraenoyl-alanine. Its pathway is lipid metabolism; hydroperoxy eicosatetraenoic acid biosynthesis. Its function is as follows. Non-heme iron-containing dioxygenase that catalyzes the stereo-specific peroxidation of free and esterified polyunsaturated fatty acids generating a spectrum of bioactive lipid mediators. It inserts peroxyl groups at C12 or C15 of arachidonate ((5Z,8Z,11Z,14Z)-eicosatetraenoate) producing both 12-hydroperoxyeicosatetraenoate/12-HPETE and 15-hydroperoxyeicosatetraenoate/15-HPETE. It may then act on 12-HPETE to produce hepoxilins, which may show pro-inflammatory properties. Can also peroxidize linoleate ((9Z,12Z)-octadecadienoate) to 13-hydroperoxyoctadecadienoate. May participate in the sequential oxidations of DHA ((4Z,7Z,10Z,13Z,16Z,19Z)-docosahexaenoate) to generate specialized pro-resolving mediators (SPMs)like resolvin D5 ((7S,17S)-diHPDHA) and (7S,14S)-diHPDHA, that actively down-regulate the immune response and have anti-aggregation properties with platelets. Can convert epoxy fatty acids to hydroperoxy-epoxides derivatives followed by an intramolecular nucleophilic substitution leading to the formation of monocyclic endoperoxides. Plays an important role during the maintenance of self-tolerance by peroxidizing membrane-bound phosphatidylethanolamine which can then signal the sorting process for clearance of apoptotic cells during inflammation and prevent an autoimmune response. In addition to its role in the immune and inflammatory responses, this enzyme may play a role in epithelial wound healing in the cornea through production of lipoxin A4 (LXA(4)) and docosahexaenoic acid-derived neuroprotectin D1 (NPD1; 10R,17S-HDHA), both lipid autacoids exhibit anti-inflammatory and neuroprotective properties. Furthermore, it may regulate actin polymerization which is crucial for several biological processes such as the phagocytosis of apoptotic cells. It is also implicated in the generation of endogenous ligands for peroxisome proliferator activated receptor (PPAR-gamma), hence modulating macrophage development and function. It may also exert a negative effect on skeletal development by regulating bone mass through this pathway. As well as participates in ER stress and downstream inflammation in adipocytes, pancreatic islets, and liver. Finally, it is also involved in the cellular response to IL13/interleukin-13. This chain is Polyunsaturated fatty acid lipoxygenase ALOX15, found in Bos taurus (Bovine).